We begin with the raw amino-acid sequence, 315 residues long: DNA-directed RNA polymerase subunit alpha (315 aa).

An alpha N-terminal domain (alpha-NTD) region spans residues 1–229 (MLDSKLKAPV…EHLTYFSNPQ (229 aa)). Positions 247 to 315 (EQEEELDLPL…LEKKGFTLKE (69 aa)) are alpha C-terminal domain (alpha-CTD).

It belongs to the RNA polymerase alpha chain family. As to quaternary structure, homodimer. The RNAP catalytic core consists of 2 alpha, 1 beta, 1 beta' and 1 omega subunit. When a sigma factor is associated with the core the holoenzyme is formed, which can initiate transcription.

The catalysed reaction is RNA(n) + a ribonucleoside 5'-triphosphate = RNA(n+1) + diphosphate. DNA-dependent RNA polymerase catalyzes the transcription of DNA into RNA using the four ribonucleoside triphosphates as substrates. This chain is DNA-directed RNA polymerase subunit alpha, found in Thermus thermophilus (strain ATCC BAA-163 / DSM 7039 / HB27).